Here is a 363-residue protein sequence, read N- to C-terminus: Phosphoserine aminotransferase (363 aa).

Serine 9 and arginine 42 together coordinate L-glutamate. Residues 76–77 (AR), tryptophan 102, threonine 154, aspartate 174, and glutamine 197 contribute to the pyridoxal 5'-phosphate site. Lysine 198 carries the N6-(pyridoxal phosphate)lysine modification. 240-241 (NT) serves as a coordination point for pyridoxal 5'-phosphate.

Belongs to the class-V pyridoxal-phosphate-dependent aminotransferase family. SerC subfamily. In terms of assembly, homodimer. Requires pyridoxal 5'-phosphate as cofactor.

It is found in the cytoplasm. It catalyses the reaction O-phospho-L-serine + 2-oxoglutarate = 3-phosphooxypyruvate + L-glutamate. The enzyme catalyses 4-(phosphooxy)-L-threonine + 2-oxoglutarate = (R)-3-hydroxy-2-oxo-4-phosphooxybutanoate + L-glutamate. It participates in amino-acid biosynthesis; L-serine biosynthesis; L-serine from 3-phospho-D-glycerate: step 2/3. The protein operates within cofactor biosynthesis; pyridoxine 5'-phosphate biosynthesis; pyridoxine 5'-phosphate from D-erythrose 4-phosphate: step 3/5. Catalyzes the reversible conversion of 3-phosphohydroxypyruvate to phosphoserine and of 3-hydroxy-2-oxo-4-phosphonooxybutanoate to phosphohydroxythreonine. The polypeptide is Phosphoserine aminotransferase (Baumannia cicadellinicola subsp. Homalodisca coagulata).